The following is a 461-amino-acid chain: Elongation factor 1-alpha (461 aa).

Glycine 2 bears the N,N,N-trimethylglycine mark. The region spanning 5-242 is the tr-type G domain; the sequence is KIHINIVVIG…DAILPPSRPT (238 aa). Positions 14–21 are G1; sequence GHVDSGKS. 14-21 is a GTP binding site; it reads GHVDSGKS. Residues 70 to 74 are G2; that stretch reads GITID. The G3 stretch occupies residues 91–94; it reads DAPG. GTP contacts are provided by residues 153–156 and 194–196; these read NKMD and SGW. The tract at residues 153 to 156 is G4; that stretch reads NKMD. The tract at residues 194-196 is G5; the sequence is SGW. 2 positions are modified to 5-glutamyl glycerylphosphorylethanolamine: glutamate 301 and glutamate 374.

Belongs to the TRAFAC class translation factor GTPase superfamily. Classic translation factor GTPase family. EF-Tu/EF-1A subfamily.

It localises to the cytoplasm. It carries out the reaction GTP + H2O = GDP + phosphate + H(+). In terms of biological role, translation elongation factor that catalyzes the GTP-dependent binding of aminoacyl-tRNA (aa-tRNA) to the A-site of ribosomes during the elongation phase of protein synthesis. Base pairing between the mRNA codon and the aa-tRNA anticodon promotes GTP hydrolysis, releasing the aa-tRNA from EEF1A1 and allowing its accommodation into the ribosome. The growing protein chain is subsequently transferred from the P-site peptidyl tRNA to the A-site aa-tRNA, extending it by one amino acid through ribosome-catalyzed peptide bond formation. This is Elongation factor 1-alpha (eef1a) from Oryzias latipes (Japanese rice fish).